We begin with the raw amino-acid sequence, 129 residues long: Small ribosomal subunit protein uS8 (129 aa).

It belongs to the universal ribosomal protein uS8 family. As to quaternary structure, part of the 30S ribosomal subunit.

Functionally, one of the primary rRNA binding proteins, it binds directly to 16S rRNA central domain where it helps coordinate assembly of the platform of the 30S subunit. The protein is Small ribosomal subunit protein uS8 of Thermoplasma volcanium (strain ATCC 51530 / DSM 4299 / JCM 9571 / NBRC 15438 / GSS1).